Reading from the N-terminus, the 281-residue chain is Pantothenate synthetase (281 aa).

30-37 (MGALHHGH) contributes to the ATP binding site. H37 (proton donor) is an active-site residue. Q61 contributes to the (R)-pantoate binding site. Q61 contacts beta-alanine. ATP is bound at residue 147-150 (GEKD). Q153 is a binding site for (R)-pantoate. ATP is bound by residues L176 and 184–187 (SSSR).

This sequence belongs to the pantothenate synthetase family. As to quaternary structure, homodimer.

Its subcellular location is the cytoplasm. The catalysed reaction is (R)-pantoate + beta-alanine + ATP = (R)-pantothenate + AMP + diphosphate + H(+). It functions in the pathway cofactor biosynthesis; (R)-pantothenate biosynthesis; (R)-pantothenate from (R)-pantoate and beta-alanine: step 1/1. Its function is as follows. Catalyzes the condensation of pantoate with beta-alanine in an ATP-dependent reaction via a pantoyl-adenylate intermediate. The sequence is that of Pantothenate synthetase from Bartonella bacilliformis (strain ATCC 35685 / KC583 / Herrer 020/F12,63).